Consider the following 331-residue polypeptide: Flagellar P-ring protein (331 aa).

The first 22 residues, 1–22 (MRKVTIFIIIIVALTGFGSVRI), serve as a signal peptide directing secretion.

The protein belongs to the FlgI family. The basal body constitutes a major portion of the flagellar organelle and consists of four rings (L,P,S, and M) mounted on a central rod.

Its subcellular location is the periplasm. It is found in the bacterial flagellum basal body. In terms of biological role, assembles around the rod to form the L-ring and probably protects the motor/basal body from shearing forces during rotation. This chain is Flagellar P-ring protein, found in Pseudothermotoga lettingae (strain ATCC BAA-301 / DSM 14385 / NBRC 107922 / TMO) (Thermotoga lettingae).